Here is a 799-residue protein sequence, read N- to C-terminus: DNA ligase (799 aa).

Over residues 1 to 11 (MTEVKTGRVVD) the composition is skewed to basic and acidic residues. Residues 1 to 35 (MTEVKTGRVVDDAPVNDAPENNAAEATSPARHDAI) are disordered. NAD(+) contacts are provided by residues 67–71 (DAEYD), 116–117 (SL), and D147. The active-site N6-AMP-lysine intermediate is K149. Residues R170, E207, K327, and K351 each contribute to the NAD(+) site. Residues C445, C448, C463, and C468 each contribute to the Zn(2+) site. Residues 634 to 723 (AIVLPLQGLK…VASVDASEAV (90 aa)) enclose the BRCT domain. The disordered stretch occupies residues 720 to 799 (SEAVAEETPP…RGRAEQLKLF (80 aa)). The segment covering 755-767 (GSASGDDSRGAAA) has biased composition (low complexity). Residues 787–799 (DVPRGRAEQLKLF) show a composition bias toward basic and acidic residues.

This sequence belongs to the NAD-dependent DNA ligase family. LigA subfamily. It depends on Mg(2+) as a cofactor. The cofactor is Mn(2+).

It catalyses the reaction NAD(+) + (deoxyribonucleotide)n-3'-hydroxyl + 5'-phospho-(deoxyribonucleotide)m = (deoxyribonucleotide)n+m + AMP + beta-nicotinamide D-nucleotide.. Its function is as follows. DNA ligase that catalyzes the formation of phosphodiester linkages between 5'-phosphoryl and 3'-hydroxyl groups in double-stranded DNA using NAD as a coenzyme and as the energy source for the reaction. It is essential for DNA replication and repair of damaged DNA. In Nitratidesulfovibrio vulgaris (strain ATCC 29579 / DSM 644 / CCUG 34227 / NCIMB 8303 / VKM B-1760 / Hildenborough) (Desulfovibrio vulgaris), this protein is DNA ligase.